Here is a 181-residue protein sequence, read N- to C-terminus: Shikimate kinase 2 (181 aa).

An ATP-binding site is contributed by 12–17 (GCGKTT). The Mg(2+) site is built by Thr-16 and Asp-32. Asp-34, Arg-58, and Gly-79 together coordinate substrate. The interval 112–126 (EAEPEAELRPTLTGK) is LID domain. Arg-120 is a binding site for ATP. Arg-139 contributes to the substrate binding site.

This sequence belongs to the shikimate kinase family. AroL subfamily. In terms of assembly, monomer. Requires Mg(2+) as cofactor.

It is found in the cytoplasm. The catalysed reaction is shikimate + ATP = 3-phosphoshikimate + ADP + H(+). It participates in metabolic intermediate biosynthesis; chorismate biosynthesis; chorismate from D-erythrose 4-phosphate and phosphoenolpyruvate: step 5/7. Its function is as follows. Catalyzes the specific phosphorylation of the 3-hydroxyl group of shikimic acid using ATP as a cosubstrate. The sequence is that of Shikimate kinase 2 from Salmonella schwarzengrund (strain CVM19633).